Consider the following 117-residue polypeptide: Ig heavy chain V region 1-62-3 (117 aa).

A signal peptide spans 1–19 (MGWSCIMLFLAATATGVHF). Positions 20-49 (QVQLQQPGAELVKPGASVKLSSKASGYTFT) are framework-1. The complementarity-determining-1 stretch occupies residues 50 to 54 (SYWMH). Residues 55 to 68 (WVKQRPGRGLEWIG) are framework-2. A complementarity-determining-2 region spans residues 69 to 85 (RIDPNSGGTKYNEKFKS). The tract at residues 86-117 (KATLTVDKPSSTAYMQLSSLTSEDSAVYYCAR) is framework-3.

In Mus musculus (Mouse), this protein is Ig heavy chain V region 1-62-3 (Ighv1-62-3).